The chain runs to 308 residues: MRFKGLDLNLLVALDALMTERNLTAAARSINLSQPAMSAAVGRLRVYFEDELFTMNGRELVLTPRAKGLVSAVREALLHIQLSIISWEPFDPFQSDRRFRIILSDFLTLVFMEKVVKRRAREAPGVSFEFLPLADDYDELLRRGEVDFIILPDVFMPTGHPRAKLFEERLVCVGCGRNQELSQPLTFDRYMSMGHVAAKFGNSRRPSIEEWYLLEHGFKRRIEVVVQGFSMILPVLSNTNRIATVPLRLAQHFAEVLPLRIMDLPLPLPPFTEAVQWPALQNSDPASLWMRGILLQEASRLALPSAEH.

Positions 6 to 63 (LDLNLLVALDALMTERNLTAAARSINLSQPAMSAAVGRLRVYFEDELFTMNGRELVLT) constitute an HTH lysR-type domain. Positions 23-42 (LTAAARSINLSQPAMSAAVG) form a DNA-binding region, H-T-H motif.

This sequence belongs to the LysR transcriptional regulatory family.

Its function is as follows. NodD regulates the expression of the nodABCFE genes which encode other nodulation proteins. NodD is also a negative regulator of its own expression. Binds flavonoids as inducers. The polypeptide is Nodulation protein D 1 (nodD1) (Rhizobium tropici).